Here is a 170-residue protein sequence, read N- to C-terminus: Photosystem I assembly protein Ycf3 (170 aa).

TPR repeat units follow at residues 35–68 (AFTY…EIDP), 72–105 (SYIL…NPFL), and 120–153 (GEQA…TPGN).

The protein belongs to the Ycf3 family.

Its subcellular location is the plastid. The protein localises to the chloroplast thylakoid membrane. Its function is as follows. Essential for the assembly of the photosystem I (PSI) complex. May act as a chaperone-like factor to guide the assembly of the PSI subunits. In Saccharum officinarum (Sugarcane), this protein is Photosystem I assembly protein Ycf3.